A 180-amino-acid chain; its full sequence is MHGENEVVVLRLGHRPGRDNRMTTHVGLTARALGADRVSIAGAASDSKATIEDITDRFGGPFEVELTTEPRALVRDWAGTVVHLTMYGQRIQDVEADIREAHASGPVLIVVGAEKVPFDVYEQADYNVGVTNQPHSEVAGLAVFLDRLFEGRQLDREWENADRRVVPKETGKRVEPVDEE.

S-adenosyl-L-methionine is bound by residues Leu-84 and 112 to 116 (GAEKV).

It belongs to the aTrm56 family. Homodimer.

It is found in the cytoplasm. The catalysed reaction is cytidine(56) in tRNA + S-adenosyl-L-methionine = 2'-O-methylcytidine(56) in tRNA + S-adenosyl-L-homocysteine + H(+). Its function is as follows. Specifically catalyzes the AdoMet-dependent 2'-O-ribose methylation of cytidine at position 56 in tRNAs. The polypeptide is tRNA (cytidine(56)-2'-O)-methyltransferase (Natronomonas pharaonis (strain ATCC 35678 / DSM 2160 / CIP 103997 / JCM 8858 / NBRC 14720 / NCIMB 2260 / Gabara) (Halobacterium pharaonis)).